We begin with the raw amino-acid sequence, 133 residues long: Urease subunit beta (133 aa).

The tract at residues Val-106–Lys-133 is disordered.

The protein belongs to the urease beta subunit family. In terms of assembly, heterotrimer of UreA (gamma), UreB (beta) and UreC (alpha) subunits. Three heterotrimers associate to form the active enzyme.

The protein resides in the cytoplasm. The catalysed reaction is urea + 2 H2O + H(+) = hydrogencarbonate + 2 NH4(+). It participates in nitrogen metabolism; urea degradation; CO(2) and NH(3) from urea (urease route): step 1/1. This is Urease subunit beta from Staphylococcus epidermidis (strain ATCC 12228 / FDA PCI 1200).